We begin with the raw amino-acid sequence, 381 residues long: Prostatic acid phosphatase (381 aa).

Positions 1–31 (MRAVPLHLVGTASLTLGFLLLLSLRLDPGQA) are cleaved as a signal peptide. Arg42 contributes to the substrate binding site. Catalysis depends on His43, which acts as the Nucleophile. Arg46 contacts substrate. The N-linked (GlcNAc...) asparagine glycan is linked to Asn93. Arg110 contributes to the substrate binding site. 3 disulfide bridges follow: Cys160–Cys371, Cys214–Cys312, and Cys346–Cys350. Residue Asn219 is glycosylated (N-linked (GlcNAc...) asparagine). His288 serves as a coordination point for substrate. Asp289 functions as the Proton donor in the catalytic mechanism. Asn332 carries an N-linked (GlcNAc...) asparagine glycan.

Belongs to the histidine acid phosphatase family. In terms of assembly, homodimer; dimer formation is required for phosphatase activity. In terms of processing, N-glycosylated. Expressed in prostate epithelium. Also expressed in the pelvic nerve and sacral spinal cord. Localizes in peptidergic and non-peptidergic nociceptive (pain-sensing) neurons.

The protein localises to the secreted. The protein resides in the cell membrane. Its subcellular location is the lysosome membrane. The catalysed reaction is a phosphate monoester + H2O = an alcohol + phosphate. It carries out the reaction a ribonucleoside 5'-phosphate + H2O = a ribonucleoside + phosphate. The enzyme catalyses 1-(9Z-octadecenoyl)-sn-glycero-3-phosphate + H2O = 1-(9Z-octadecenoyl)-sn-glycerol + phosphate. It catalyses the reaction O-phospho-L-tyrosyl-[protein] + H2O = L-tyrosyl-[protein] + phosphate. Its activity is regulated as follows. Inhibited by L(+)-tartrate. Functionally, a non-specific tyrosine phosphatase that dephosphorylates a diverse number of substrates under acidic conditions (pH 4-6) including alkyl, aryl, and acyl orthophosphate monoesters and phosphorylated proteins. Has lipid phosphatase activity and inactivates lysophosphatidic acid in seminal plasma. Its function is as follows. In addition to its tyrosine phosphatase activity, also has ecto-5'-nucleotidase activity in dorsal root ganglion (DRG) neurons. Generates adenosine from AMP. This extracellular adenosine leads to a decrease in chronic pain by activating A1R in nociceptive neurons. The chain is Prostatic acid phosphatase (Acp3) from Rattus norvegicus (Rat).